A 221-amino-acid polypeptide reads, in one-letter code: Probable serine protease inhibitor 6 (221 aa).

A signal peptide spans 1-22 (MKCLFLLCLCLFPIVVFSSTFT). Positions 23–28 (SQNPIN) are excised as a propeptide. The Vacuolar targeting signal motif lies at 25-30 (NPINLP). 2 disulfide bridges follow: cysteine 76–cysteine 125 and cysteine 174–cysteine 191.

It belongs to the protease inhibitor I3 (leguminous Kunitz-type inhibitor) family.

It localises to the vacuole. Its function is as follows. Inhibitor of trypsin (serine protease). May protect the plant by inhibiting proteases of invading organisms. This is Probable serine protease inhibitor 6 from Solanum tuberosum (Potato).